A 437-amino-acid chain; its full sequence is UDP-N-acetylmuramate--L-alanine ligase (437 aa).

Residue 108-114 (GAHGKTS) coordinates ATP.

The protein belongs to the MurCDEF family.

The protein localises to the cytoplasm. The enzyme catalyses UDP-N-acetyl-alpha-D-muramate + L-alanine + ATP = UDP-N-acetyl-alpha-D-muramoyl-L-alanine + ADP + phosphate + H(+). Its pathway is cell wall biogenesis; peptidoglycan biosynthesis. Its function is as follows. Cell wall formation. In Staphylococcus haemolyticus (strain JCSC1435), this protein is UDP-N-acetylmuramate--L-alanine ligase.